Consider the following 298-residue polypeptide: Putative F-box and FNIP repeat-containing protein R286 (298 aa).

One can recognise an F-box domain in the interval 4-48; sequence LNVLESHVILHIIEFLPDHEKIKFMSTCKSLYEFRCHVTYNNFYV. FNIP repeat units lie at residues 124-165 and 255-297; these read FNKP…LGHN and WNFD…FISR.

This is Putative F-box and FNIP repeat-containing protein R286 from Acanthamoeba polyphaga (Amoeba).